Here is a 609-residue protein sequence, read N- to C-terminus: Granule-bound starch synthase 1, chloroplastic/amyloplastic (609 aa).

A chloroplast-targeting transit peptide spans 1 to 77 (MSALTTSQLA…SRRFPSVVVY (77 aa)). The tract at residues 29–67 (RHGFQGLKPRSPAGGDATSLSVTTSARATPKQQRSVQRG) is disordered. Residues 46-66 (TSLSVTTSARATPKQQRSVQR) show a composition bias toward polar residues. Lys97 contributes to the ADP-alpha-D-glucose binding site. Positions 100, 408, 413, 462, and 493 each coordinate ADP. The cysteines at positions 337 and 529 are disulfide-linked.

It belongs to the glycosyltransferase 1 family. Bacterial/plant glycogen synthase subfamily.

The protein resides in the plastid. Its subcellular location is the chloroplast. It is found in the amyloplast. The catalysed reaction is an NDP-alpha-D-glucose + [(1-&gt;4)-alpha-D-glucosyl](n) = [(1-&gt;4)-alpha-D-glucosyl](n+1) + a ribonucleoside 5'-diphosphate + H(+). It participates in glycan biosynthesis; starch biosynthesis. In terms of biological role, required for the synthesis of amylose in endosperm. This is Granule-bound starch synthase 1, chloroplastic/amyloplastic (WAXY) from Oryza sativa subsp. indica (Rice).